The sequence spans 432 residues: Enolase (432 aa).

Gln-163 contributes to the (2R)-2-phosphoglycerate binding site. Catalysis depends on Glu-205, which acts as the Proton donor. Residues Asp-242, Glu-285, and Asp-312 each contribute to the Mg(2+) site. 4 residues coordinate (2R)-2-phosphoglycerate: Lys-337, Arg-366, Ser-367, and Lys-388. The active-site Proton acceptor is Lys-337.

Belongs to the enolase family. Mg(2+) is required as a cofactor.

It is found in the cytoplasm. Its subcellular location is the secreted. The protein resides in the cell surface. The enzyme catalyses (2R)-2-phosphoglycerate = phosphoenolpyruvate + H2O. The protein operates within carbohydrate degradation; glycolysis; pyruvate from D-glyceraldehyde 3-phosphate: step 4/5. Functionally, catalyzes the reversible conversion of 2-phosphoglycerate (2-PG) into phosphoenolpyruvate (PEP). It is essential for the degradation of carbohydrates via glycolysis. The chain is Enolase from Bifidobacterium longum (strain DJO10A).